We begin with the raw amino-acid sequence, 115 residues long: Pro-FMRFamide-related neuropeptide FF (115 aa).

An N-terminal signal peptide occupies residues 1-22 (MDARQAAALLLVLLLVTDWSHA). 2 disordered regions span residues 20-51 (SHAEGPGGRDGGDQIFMEEDSGAHPAQDAQTP) and 78-102 (FGRNTRGSWSNKRLSPRAGEGLSSP). Positions 23 to 66 (EGPGGRDGGDQIFMEEDSGAHPAQDAQTPRSLLRSLLQAMQRPG) are excised as a propeptide. Phe-78 carries the phenylalanine amide modification. The propeptide occupies 81–94 (NTRGSWSNKRLSPR). Phe-112 is subject to Phenylalanine amide.

This sequence belongs to the FARP (FMRFamide related peptide) family.

The protein localises to the secreted. Morphine modulating peptides. Have wide-ranging physiologic effects, including the modulation of morphine-induced analgesia, elevation of arterial blood pressure, and increased somatostatin secretion from the pancreas. The neuropeptide FF potentiates and sensitizes ASIC3 cation channel. The polypeptide is Pro-FMRFamide-related neuropeptide FF (NPFF) (Bos taurus (Bovine)).